The primary structure comprises 253 residues: ER membrane protein complex subunit 3 (253 aa).

A run of 3 helical transmembrane segments spans residues 10–30, 126–146, and 176–196; these read WVLL…QYIM, FIPQ…FILM, and SISW…LIGL.

It belongs to the EMC3 family. As to quaternary structure, component of the ER membrane protein complex (EMC), which is composed of EMC1, EMC2, EMC3, EMC4, EMC5 and EMC6.

It localises to the endoplasmic reticulum membrane. In terms of biological role, the EMC seems to be required for efficient folding of proteins in the endoplasmic reticulum (ER). The sequence is that of ER membrane protein complex subunit 3 (AIM27) from Saccharomyces cerevisiae (strain YJM789) (Baker's yeast).